The sequence spans 275 residues: MAASAQKLLGRLGTVGVGLSIAGGIAQTALYNVDGGQRAVIFDRFSGVKNEVVGEGTHFLIPWVQKPIIFDIRSTPRAVTTITGSKDLQNVNITLRILHRPSPDRLPNIYLNIGLDYAERVLPSITNEVLKAVVAQFDAHEMITQREVVSQRASVALRERAAQFGLLLDDIAITHLNFGREFTEAVEMKQVAQQEAEKARYLVEKAEQMKIAAVTTAEGDAQAAKLLAKAFASAGDGLVELRKIEAAEEIAERMAKNKNVTYLPGNQQTLLNLQS.

Residues 180 to 213 (REFTEAVEMKQVAQQEAEKARYLVEKAEQMKIAA) are a coiled coil.

This sequence belongs to the prohibitin family. High molecular weight complex that consist of phb-1 and phb-2.

It localises to the mitochondrion inner membrane. Functionally, PHB proteins are essential during embryonic development and are required for somatic and germline differentiation in the larval gonad. A deficiency in PHB proteins results in altered mitochondrial biogenesis in body wall muscle cells. This Caenorhabditis elegans protein is Mitochondrial prohibitin complex protein 1 (phb-1).